A 411-amino-acid chain; its full sequence is Na(+)-translocating NADH-quinone reductase subunit F (411 aa).

The chain crosses the membrane as a helical span at residues 6-26; that stretch reads AIGGVAMFTLIIMSFVAIILA. One can recognise a 2Fe-2S ferredoxin-type domain in the interval 35–129; sequence GDVTIHINDN…DMKIEIDPEF (95 aa). Residues Cys-72, Cys-78, Cys-81, and Cys-113 each contribute to the [2Fe-2S] cluster site. The region spanning 132-273 is the FAD-binding FR-type domain; sequence VQKWECEVIS…SGPYGEFFAK (142 aa).

The protein belongs to the NqrF family. As to quaternary structure, composed of six subunits; NqrA, NqrB, NqrC, NqrD, NqrE and NqrF. [2Fe-2S] cluster serves as cofactor. The cofactor is FAD.

Its subcellular location is the cell inner membrane. The enzyme catalyses a ubiquinone + n Na(+)(in) + NADH + H(+) = a ubiquinol + n Na(+)(out) + NAD(+). Its function is as follows. NQR complex catalyzes the reduction of ubiquinone-1 to ubiquinol by two successive reactions, coupled with the transport of Na(+) ions from the cytoplasm to the periplasm. The first step is catalyzed by NqrF, which accepts electrons from NADH and reduces ubiquinone-1 to ubisemiquinone by a one-electron transfer pathway. In Psychrobacter arcticus (strain DSM 17307 / VKM B-2377 / 273-4), this protein is Na(+)-translocating NADH-quinone reductase subunit F.